Consider the following 185-residue polypeptide: Vomeronasal secretory protein 2 (185 aa).

A signal peptide spans 1-19; it reads MKSLLLTVTLSSLVATLQT. Cys-80 and Cys-172 are joined by a disulfide.

This sequence belongs to the calycin superfamily. Lipocalin family. As to expression, specifically expressed in vomeronasal and posterior glands of the nasal septum, the ducts of which open into the lumen of the vomeronasal organ.

Its subcellular location is the secreted. In terms of biological role, transport of lipophilic molecules, possible pheromone-carrier. The polypeptide is Vomeronasal secretory protein 2 (Lcn4) (Mus musculus (Mouse)).